A 192-amino-acid chain; its full sequence is Putative BTB/POZ domain-containing protein At4g04090 (192 aa).

One can recognise a BTB domain in the interval 23–96; that stretch reads VDVRLMARDS…TYSDGSMLSE (74 aa).

Its pathway is protein modification; protein ubiquitination. Functionally, may act as a substrate-specific adapter of an E3 ubiquitin-protein ligase complex (CUL3-RBX1-BTB) which mediates the ubiquitination and subsequent proteasomal degradation of target proteins. This chain is Putative BTB/POZ domain-containing protein At4g04090, found in Arabidopsis thaliana (Mouse-ear cress).